We begin with the raw amino-acid sequence, 384 residues long: Gastrin-releasing peptide receptor (384 aa).

The Extracellular portion of the chain corresponds to 1-39 (MDPNNCSHLNLEVDPFLSCNNTFNQTLNPPKMDNWFHPG). Asparagine 5, asparagine 20, and asparagine 24 each carry an N-linked (GlcNAc...) asparagine glycan. Residues 40 to 63 (IIYVIPAVYGLIIVIGLIGNITLI) traverse the membrane as a helical segment. Residues 64–77 (KIFCTVKSMRNVPN) lie on the Cytoplasmic side of the membrane. A helical membrane pass occupies residues 78–97 (LFISSLALGDLLLLVTCAPV). Topologically, residues 98 to 115 (DASKYLADRWLFGRIGCK) are extracellular. Residues cysteine 114 and cysteine 197 are joined by a disulfide bond. The helical transmembrane segment at 116–137 (LIPFIQLTSVGVSVFTLTALSA) threads the bilayer. At 138 to 153 (DRYKAIVRPMDIQASH) the chain is on the cytoplasmic side. Residues 154–175 (ALMKICLKAALIWIVSMLLAIP) traverse the membrane as a helical segment. At 176-209 (EAVFSDLHPFHVKDTNQTFISCAPYPHSNELHPK) the chain is on the extracellular side. Residues 210–235 (IHSMASFLVFYIIPLSIISVYYYFIA) traverse the membrane as a helical segment. Topologically, residues 236–265 (RNLIQSAYNLPVEGNIHVKKQIESRKRLAK) are cytoplasmic. Residues 266 to 286 (TVLVFVGLFAFCWLPNHVIYL) traverse the membrane as a helical segment. The Extracellular portion of the chain corresponds to 287-299 (YRSYHYSEVDTSM). The chain crosses the membrane as a helical span at residues 300-326 (LHFITSICARLLAFTNSCVNPFALYLL). The Cytoplasmic portion of the chain corresponds to 327–384 (SKSFRKQFNTQLLCCQPSLLNRSHSTGRSTTCMTSFKSTNPSATFSLINGNICHEGYV). Residue cysteine 340 is the site of S-palmitoyl cysteine attachment. The residue at position 351 (serine 351) is a Phosphoserine.

The protein belongs to the G-protein coupled receptor 1 family. Expressed in the hippocampal CA1 region (at protein level).

Its subcellular location is the cell membrane. Its function is as follows. Receptor for gastrin-releasing peptide (GRP). Signals via association with G proteins that activate a phosphatidylinositol-calcium second messenger system, resulting in Akt phosphorylation. Contributes to the regulation of food intake. Contributes to the perception of prurient stimuli and transmission of itch signals in the spinal cord that promote scratching behavior, but does not play a role in the perception of pain. Contributes primarily to nonhistaminergic itch sensation. In one study, shown to act in the amygdala as part of an inhibitory network which inhibits memory specifically related to learned fear. In another study, shown to contribute to disinhibition of glutamatergic cells in the auditory cortex via signaling on vasoactive intestinal peptide-expressing cells which leads to enhanced auditory fear memories. Contributes to the induction of sighing through signaling in the pre-Botzinger complex, a cluster of several thousand neurons in the ventrolateral medulla responsible for inspiration during respiratory activity. This chain is Gastrin-releasing peptide receptor (Grpr), found in Rattus norvegicus (Rat).